We begin with the raw amino-acid sequence, 101 residues long: Small ribosomal subunit protein bS18c (101 aa).

A compositionally biased stretch (basic residues) spans 1 to 19; it reads MDKSKQLFRKSKGSFRRRL. A disordered region spans residues 1–23; sequence MDKSKQLFRKSKGSFRRRLPPIG.

This sequence belongs to the bacterial ribosomal protein bS18 family. Part of the 30S ribosomal subunit.

It is found in the plastid. The protein resides in the chloroplast. The sequence is that of Small ribosomal subunit protein bS18c from Acorus gramineus (Dwarf sweet flag).